The following is a 661-amino-acid chain: Vasorin (661 aa).

A signal peptide spans methionine 1–threonine 19. Residues glutamate 20 to proline 50 form the LRRNT domain. Residues glutamate 20–threonine 563 lie on the Extracellular side of the membrane. LRR repeat units follow at residues threonine 52–glycine 72, glycine 75–asparagine 96, asparagine 99–glycine 120, arginine 123–glycine 144, serine 147–histidine 168, leucine 169–alanine 189, asparagine 191–glycine 212, asparagine 215–threonine 237, lysine 238–leucine 258, and proline 259–serine 281. N-linked (GlcNAc...) asparagine glycosylation occurs at asparagine 99. The 54-residue stretch at asparagine 293–alanine 346 folds into the LRRCT domain. The span at threonine 348 to threonine 385 shows a compositional bias: low complexity. The segment at threonine 348 to threonine 395 is disordered. Positions glutamate 403 to glutamate 440 constitute an EGF-like domain. 3 cysteine pairs are disulfide-bonded: cysteine 407-cysteine 418, cysteine 412-cysteine 428, and cysteine 430-cysteine 439. The Fibronectin type-III domain occupies glutamate 455–threonine 543. N-linked (GlcNAc...) asparagine glycosylation is found at asparagine 518 and asparagine 561. Residues leucine 564 to alanine 584 traverse the membrane as a helical segment. Residues cysteine 585–phenylalanine 661 lie on the Cytoplasmic side of the membrane. A disordered region spans residues lysine 591 to phenylalanine 661. Positions aspartate 606 to glutamate 623 are enriched in basic and acidic residues.

The protein localises to the membrane. May act as an inhibitor of TGF-beta signaling. The protein is Vasorin (vasn) of Xenopus tropicalis (Western clawed frog).